The sequence spans 397 residues: Lysosomal acid lipase/cholesteryl ester hydrolase (397 aa).

The first 25 residues, 1 to 25 (MQLLGRVICFVVGILLSGGPTGTIS), serve as a signal peptide directing secretion. Positions 26–72 (AVDPEANMNVTEIIMHWGYPEHSVQTGDGYILGVHRIPHGRKNQFDK) are cleaved as a propeptide — removed in mature form. N-linked (GlcNAc...) asparagine glycans are attached at residues N34, N99, and N159. Residues 84–378 (HGFLADSSNW…EWDHLDFIWG (295 aa)) enclose the AB hydrolase-1 domain. Residue S172 is the Charge relay system of the active site. N-linked (GlcNAc...) asparagine glycans are attached at residues N271 and N319. The Charge relay system role is filled by H372.

Belongs to the AB hydrolase superfamily. Lipase family. Monomer. Post-translationally, glycosylation is not essential for catalytic activity.

The protein localises to the lysosome. It carries out the reaction a sterol ester + H2O = a sterol + a fatty acid + H(+). It catalyses the reaction cholesteryl (9Z-octadecenoate) + H2O = cholesterol + (9Z)-octadecenoate + H(+). The enzyme catalyses a triacylglycerol + H2O = a 1,2-diacylglycerol + a fatty acid + H(+). The catalysed reaction is 1,2-di-(9Z-octadecenoyl)-glycerol + (9Z)-octadecenoate + H(+) = 1,2,3-tri-(9Z-octadecenoyl)-glycerol + H2O. It carries out the reaction a 1,2-diacylglycerol + H2O = a 1-acylglycerol + a fatty acid + H(+). It catalyses the reaction 1,2-di-(9Z-octadecenoyl)-glycerol + H2O = 1-(9Z-octadecenoyl)-glycerol + (9Z)-octadecenoate + H(+). The enzyme catalyses a 1,3-diacylglycerol + H2O = a 1-acylglycerol + a fatty acid + H(+). The catalysed reaction is 1,3-di-(9Z-octadecenoyl)-glycerol + H2O = 1-(9Z-octadecenoyl)-glycerol + (9Z)-octadecenoate + H(+). Its function is as follows. Catalyzes the deacylation of cholesteryl ester core lipids of endocytosed low density lipoproteins to generate free fatty acids and cholesterol. Hydrolyzes triglycerides (1,2,3-triacylglycerol) and diglycerides (such as 1,2-diacylglycerol and 1,3-diacylglycerol) with preference for the acyl moieties at the sn-1 or sn-3 positions. The polypeptide is Lysosomal acid lipase/cholesteryl ester hydrolase (Lipa) (Rattus norvegicus (Rat)).